Reading from the N-terminus, the 269-residue chain is Large ribosomal subunit protein uL3m (269 aa).

A mitochondrion-targeting transit peptide spans 1 to 19 (MSKFLQGSIFSISKLHVRY).

It belongs to the universal ribosomal protein uL3 family. As to quaternary structure, component of the mitochondrial large ribosomal subunit (mt-LSU). Mature yeast 74S mitochondrial ribosomes consist of a small (37S) and a large (54S) subunit. The 37S small subunit contains a 15S ribosomal RNA (15S mt-rRNA) and 34 different proteins. The 54S large subunit contains a 21S rRNA (21S mt-rRNA) and 46 different proteins.

The protein resides in the mitochondrion. In terms of biological role, component of the mitochondrial ribosome (mitoribosome), a dedicated translation machinery responsible for the synthesis of mitochondrial genome-encoded proteins, including at least some of the essential transmembrane subunits of the mitochondrial respiratory chain. The mitoribosomes are attached to the mitochondrial inner membrane and translation products are cotranslationally integrated into the membrane. This chain is Large ribosomal subunit protein uL3m (MRPL9), found in Saccharomyces cerevisiae (strain ATCC 204508 / S288c) (Baker's yeast).